The following is a 270-amino-acid chain: Putative phosphoenolpyruvate synthase regulatory protein (270 aa).

Residue 150-157 (GVSRCGKT) participates in ADP binding.

Belongs to the pyruvate, phosphate/water dikinase regulatory protein family. PSRP subfamily.

The catalysed reaction is [pyruvate, water dikinase] + ADP = [pyruvate, water dikinase]-phosphate + AMP + H(+). It carries out the reaction [pyruvate, water dikinase]-phosphate + phosphate + H(+) = [pyruvate, water dikinase] + diphosphate. Functionally, bifunctional serine/threonine kinase and phosphorylase involved in the regulation of the phosphoenolpyruvate synthase (PEPS) by catalyzing its phosphorylation/dephosphorylation. This Shewanella halifaxensis (strain HAW-EB4) protein is Putative phosphoenolpyruvate synthase regulatory protein.